We begin with the raw amino-acid sequence, 80 residues long: Sulfur carrier protein TusA (80 aa).

The active-site Cysteine persulfide intermediate is C17.

This sequence belongs to the sulfur carrier protein TusA family.

The protein localises to the cytoplasm. Functionally, sulfur carrier protein which probably makes part of a sulfur-relay system. The polypeptide is Sulfur carrier protein TusA (Pseudomonas putida (strain GB-1)).